Consider the following 75-residue polypeptide: DNA-directed RNA polymerase subunit omega (75 aa).

This sequence belongs to the RNA polymerase subunit omega family. As to quaternary structure, in cyanobacteria the RNAP catalytic core is composed of 2 alpha, 1 beta, 1 beta', 1 gamma and 1 omega subunit. When a sigma factor is associated with the core the holoenzyme is formed, which can initiate transcription.

The catalysed reaction is RNA(n) + a ribonucleoside 5'-triphosphate = RNA(n+1) + diphosphate. Functionally, promotes RNA polymerase assembly. Latches the N- and C-terminal regions of the beta' subunit thereby facilitating its interaction with the beta and alpha subunits. This chain is DNA-directed RNA polymerase subunit omega, found in Cyanothece sp. (strain PCC 7425 / ATCC 29141).